The chain runs to 116 residues: MRAKGFTLIELAIVIVIIGILVAIAVPRFVDLTDQANQANVDATAAAVRSAYAIATVQAKGIPTCDQVFANPEGGSTSGSTWTSSDNSTTVSCNASADTFTISRGGKTRTLNLTVN.

Positions 1-5 (MRAKG) are cleaved as a propeptide — leader sequence. Phe6 is modified (N-methylphenylalanine). Residues 6-26 (FTLIELAIVIVIIGILVAIAV) traverse the membrane as a helical segment.

Post-translationally, glycosylated.

The protein localises to the cell inner membrane. It is found in the cell outer membrane. It localises to the periplasm. Plays an essential role in forming the main structure of the narrow T4P pili that participates in twitching motility. The chain is Type IV narrow pilus major component PilA5 (pilA5) from Thermus thermophilus (strain ATCC BAA-163 / DSM 7039 / HB27).